Consider the following 650-residue polypeptide: Phosphatidylinositol-3,5-bisphosphate 3-phosphatase MTMR14 (650 aa).

The disordered stretch occupies residues 1–27 (MAGARAAAAAASAGSSASSGNQPPQEL). The residue at position 194 (K194) is an N6-acetyllysine. N-linked (GlcNAc...) asparagine glycosylation is present at N226. The active-site Phosphocysteine intermediate is the C330. A 1,2-diacyl-sn-glycero-3-phospho-(1D-myo-inositol-3,5-bisphosphate)-binding residues include G333, W334, D335, R336, and R382. Residues G333, W334, D335, R336, and R382 each contribute to the a 1,2-diacyl-sn-glycero-3-phospho-(1D-myo-inositol-3-phosphate) site. A disordered region spans residues 476–546 (AAWRKSHSSS…PRSVDHPLPG (71 aa)). S518 carries the post-translational modification Phosphoserine. N519 carries an N-linked (GlcNAc...) asparagine glycan. Phosphoserine is present on residues S530, S580, and S624. At R638 the chain carries Omega-N-methylarginine.

Belongs to the protein-tyrosine phosphatase family. Non-receptor class myotubularin subfamily. In terms of tissue distribution, expressed in various tissues, including heart, skeletal muscle, placenta, liver, lung, kidney and pancreas.

It localises to the cytoplasm. It catalyses the reaction a 1,2-diacyl-sn-glycero-3-phospho-(1D-myo-inositol-3,5-bisphosphate) + H2O = a 1,2-diacyl-sn-glycero-3-phospho-(1D-myo-inositol-5-phosphate) + phosphate. The enzyme catalyses a 1,2-diacyl-sn-glycero-3-phospho-(1D-myo-inositol-3-phosphate) + H2O = a 1,2-diacyl-sn-glycero-3-phospho-(1D-myo-inositol) + phosphate. Lipid phosphatase that specifically dephosphorylates the D-3 position of phosphatidylinositol 3-phosphate and phosphatidylinositol 3,5-bisphosphate, generating phosphatidylinositol and phosphatidylinositol 5-phosphate. This Homo sapiens (Human) protein is Phosphatidylinositol-3,5-bisphosphate 3-phosphatase MTMR14.